The primary structure comprises 397 residues: Elongation factor Tu (397 aa).

The tr-type G domain occupies 10–207; that stretch reads KPHLNIGTIG…AVDAYIPEPE (198 aa). Residues 19–26 are G1; the sequence is GHVDHGKT. 19–26 provides a ligand contact to GTP; the sequence is GHVDHGKT. A Mg(2+)-binding site is contributed by threonine 26. Residues 60–64 are G2; the sequence is GVTIN. Residues 81-84 form a G3 region; the sequence is DCPG. GTP contacts are provided by residues 81–85 and 136–139; these read DCPGH and NKVD. The tract at residues 136-139 is G4; sequence NKVD. Residues 174–176 are G5; that stretch reads SAL.

The protein belongs to the TRAFAC class translation factor GTPase superfamily. Classic translation factor GTPase family. EF-Tu/EF-1A subfamily. In terms of assembly, monomer.

Its subcellular location is the cytoplasm. The enzyme catalyses GTP + H2O = GDP + phosphate + H(+). Functionally, GTP hydrolase that promotes the GTP-dependent binding of aminoacyl-tRNA to the A-site of ribosomes during protein biosynthesis. This Syntrophus aciditrophicus (strain SB) protein is Elongation factor Tu.